The sequence spans 466 residues: Asparagine--tRNA ligase (466 aa).

The protein belongs to the class-II aminoacyl-tRNA synthetase family. As to quaternary structure, homodimer.

It is found in the cytoplasm. It catalyses the reaction tRNA(Asn) + L-asparagine + ATP = L-asparaginyl-tRNA(Asn) + AMP + diphosphate + H(+). The chain is Asparagine--tRNA ligase from Shewanella oneidensis (strain ATCC 700550 / JCM 31522 / CIP 106686 / LMG 19005 / NCIMB 14063 / MR-1).